A 301-amino-acid polypeptide reads, in one-letter code: POU domain, class 6, transcription factor 1 (301 aa).

A run of 2 repeats spans residues Asn-11–Ile-17 and Asn-50–Ile-56. The segment at Asn-11–Ile-56 is 2 X 7 AA repeats of N-A-Q-G-Q-V-I. The disordered stretch occupies residues Gln-66–Gln-88. One can recognise a POU-specific domain in the interval Glu-139 to Glu-213. A DNA-binding region (homeobox) is located at residues Lys-234–Ser-293.

The protein belongs to the POU transcription factor family. Class-6 subfamily. In the embryo, widely expressed, with highest levels in the developing brain and spinal cord. In the adult, mostly found in the brain, where it is diffusely expressed with the exception of an enrichment in layer IV of the neocortex. Also found in kidney, lung, heart, adrenal, skin, and placenta. Low levels in spleen, muscle, liver, anterior pituitary, testis and ovary.

The protein localises to the nucleus. Its function is as follows. Transcription factor that binds preferentially to a variant of the octamer motif (5'-ATGATAAT-3'). This is POU domain, class 6, transcription factor 1 (Pou6f1) from Rattus norvegicus (Rat).